Reading from the N-terminus, the 619-residue chain is DNA mismatch repair protein MutL (619 aa).

The segment covering Glu-364–Arg-375 has biased composition (low complexity). The segment at Glu-364–Tyr-399 is disordered.

This sequence belongs to the DNA mismatch repair MutL/HexB family.

Functionally, this protein is involved in the repair of mismatches in DNA. It is required for dam-dependent methyl-directed DNA mismatch repair. May act as a 'molecular matchmaker', a protein that promotes the formation of a stable complex between two or more DNA-binding proteins in an ATP-dependent manner without itself being part of a final effector complex. The sequence is that of DNA mismatch repair protein MutL from Citrobacter koseri (strain ATCC BAA-895 / CDC 4225-83 / SGSC4696).